The sequence spans 443 residues: Regulator of sigma E protease (443 aa).

H21 is a binding site for Zn(2+). E22 is a catalytic residue. H25 contributes to the Zn(2+) binding site. A helical transmembrane segment spans residues 98–118; that stretch reads FVIIAGPLANFIFAIFAYWVI. 2 consecutive PDZ domains span residues 106 to 185 and 198 to 287; these read ANFI…SPFN and NWTF…TPVR. 2 helical membrane-spanning segments follow: residues 369–389 and 423–443; these read LVYFLSFMALISVNLGIMNLF and IGAALLLSLTVFALFNDFLRL.

The protein belongs to the peptidase M50B family. Interacts with RseA. It depends on Zn(2+) as a cofactor.

It is found in the cell inner membrane. A site-2 regulated intramembrane protease (S2P) that cleaves a peptide bond in the transmembrane region of RseA. Part of a regulated intramembrane proteolysis (RIP) cascade. Acts on DegS-cleaved RseA to release the cytoplasmic domain of RseA. This provides the cell with sigma-E (RpoE) activity through the proteolysis of RseA. The polypeptide is Regulator of sigma E protease (rsep) (Haemophilus influenzae (strain ATCC 51907 / DSM 11121 / KW20 / Rd)).